The chain runs to 609 residues: NADH-ubiquinone oxidoreductase chain 5 (609 aa).

The next 16 helical transmembrane spans lie at 3–23 (VINLFASSIITTLSMLTLPIV), 41–61 (TAISYAFMISMIPTTMFIYSG), 90–110 (MIFVPVALFVTWSIMEFSMWY), 115–135 (PFINRFFKYLLMFLITMMILV), 140–160 (LFQLFIGWEGVGIMSFLLIGW), 174–194 (AVLYNRIGDVGFIMAMAWFLI), 214–236 (VPLMGLLLAATGKSAQFGLHPWL), 244–264 (TPVSALLHSSTMVVAGVFLLI), 276–296 (MQTTTLCLGAITTLFTAICAL), 304–323 (IIAFSTSSQLGLMIVTIGIN), 328–350 (AFLHICTHAFFKAMLFLCSGSII), 368–388 (VLPFTTTSLIVGSLALTGMPF), 410–432 (WALLLTLVATSMTAAYSTRIMFF), 460–480 (LLLGSIFAGYLISYNITPTST), 491–511 (LMALTVTLLGFILALELNLTS), and 585–605 (GLIKLYFLSFIITLILALMMI).

The protein belongs to the complex I subunit 5 family. In terms of assembly, core subunit of respiratory chain NADH dehydrogenase (Complex I) which is composed of 45 different subunits.

It localises to the mitochondrion inner membrane. It catalyses the reaction a ubiquinone + NADH + 5 H(+)(in) = a ubiquinol + NAD(+) + 4 H(+)(out). Functionally, core subunit of the mitochondrial membrane respiratory chain NADH dehydrogenase (Complex I) which catalyzes electron transfer from NADH through the respiratory chain, using ubiquinone as an electron acceptor. Essential for the catalytic activity and assembly of complex I. The chain is NADH-ubiquinone oxidoreductase chain 5 (MT-ND5) from Halichoerus grypus (Gray seal).